Here is a 357-residue protein sequence, read N- to C-terminus: Glutamate 5-kinase (357 aa).

Residue Lys-7 coordinates ATP. Residues Ser-43, Asp-130, and Asn-142 each contribute to the substrate site. ATP is bound by residues 162–163 (TD) and 205–211 (TGGMTTK). The region spanning 270 to 341 (EGELCLDQGA…QALSVVTDAE (72 aa)) is the PUA domain.

This sequence belongs to the glutamate 5-kinase family.

The protein localises to the cytoplasm. The catalysed reaction is L-glutamate + ATP = L-glutamyl 5-phosphate + ADP. It functions in the pathway amino-acid biosynthesis; L-proline biosynthesis; L-glutamate 5-semialdehyde from L-glutamate: step 1/2. Catalyzes the transfer of a phosphate group to glutamate to form L-glutamate 5-phosphate. The protein is Glutamate 5-kinase of Synechococcus sp. (strain CC9902).